Reading from the N-terminus, the 546-residue chain is Inosine-5'-monophosphate dehydrogenase (546 aa).

2 CBS domains span residues 135–197 and 198–254; these read FILD…VTAI and MSTD…PLAS. Residues 292 to 294 and 342 to 344 each bind NAD(+); these read DSS and GMG. K(+) is bound by residues Gly-344 and Gly-346. Ser-347 provides a ligand contact to IMP. Cys-349 is a binding site for K(+). The active-site Thioimidate intermediate is the Cys-349. Residues 382-384, 405-406, and 430-434 each bind IMP; these read DGG, GG, and YRGMG. The active-site Proton acceptor is the Arg-460. Gln-472 serves as a coordination point for IMP. K(+) contacts are provided by Glu-531 and Gly-532.

It belongs to the IMPDH/GMPR family. Homotetramer. Requires K(+) as cofactor.

It localises to the cytoplasm. It catalyses the reaction IMP + NAD(+) + H2O = XMP + NADH + H(+). The protein operates within purine metabolism; XMP biosynthesis via de novo pathway; XMP from IMP: step 1/1. With respect to regulation, mycophenolic acid (MPA) is a non-competitive inhibitor that prevents formation of the closed enzyme conformation by binding to the same site as the amobile flap. In contrast, mizoribine monophosphate (MZP) is a competitive inhibitor that induces the closed conformation. MPA is a potent inhibitor of mammalian IMPDHs but a poor inhibitor of the bacterial enzymes. MZP is a more potent inhibitor of bacterial IMPDH. Functionally, catalyzes the conversion of inosine 5'-phosphate (IMP) to xanthosine 5'-phosphate (XMP), the first committed and rate-limiting step in the de novo synthesis of guanine nucleotides, and therefore plays an important role in the regulation of cell growth. The polypeptide is Inosine-5'-monophosphate dehydrogenase (Aspergillus fumigatus (strain ATCC MYA-4609 / CBS 101355 / FGSC A1100 / Af293) (Neosartorya fumigata)).